The chain runs to 227 residues: Ribose-5-phosphate isomerase A (227 aa).

Substrate contacts are provided by residues 26-29 (TGST), 82-85 (DGAD), and 95-98 (KGGG). Residue Glu104 is the Proton acceptor of the active site. Lys122 serves as a coordination point for substrate.

The protein belongs to the ribose 5-phosphate isomerase family. As to quaternary structure, homodimer.

It carries out the reaction aldehydo-D-ribose 5-phosphate = D-ribulose 5-phosphate. It participates in carbohydrate degradation; pentose phosphate pathway; D-ribose 5-phosphate from D-ribulose 5-phosphate (non-oxidative stage): step 1/1. Functionally, catalyzes the reversible conversion of ribose-5-phosphate to ribulose 5-phosphate. This is Ribose-5-phosphate isomerase A from Streptococcus equi subsp. equi (strain 4047).